The following is a 618-amino-acid chain: uncharacterized protein (618 aa).

Disordered regions lie at residues 70 to 118 (SSEY…SLPR), 330 to 352 (LTAR…EVPC), 456 to 552 (TLPV…PILT), and 587 to 618 (IPSD…LKTL). Composition is skewed to basic and acidic residues over residues 74–84 (KGTRRDSRGYE) and 333–343 (RTEEEPERHVP). The span at 463 to 481 (TSRPQSPSSLSSKTTGLPL) shows a compositional bias: low complexity. Composition is skewed to polar residues over residues 485–516 (KPTS…NSLM) and 609–618 (SDPSHSLKTL).

This is an uncharacterized protein from Danio rerio (Zebrafish).